Reading from the N-terminus, the 201-residue chain is Orotate phosphoribosyltransferase (201 aa).

Residues lysine 90 and 113–121 (EDIITTGGS) each bind 5-phospho-alpha-D-ribose 1-diphosphate. Threonine 117 and arginine 145 together coordinate orotate.

It belongs to the purine/pyrimidine phosphoribosyltransferase family. PyrE subfamily. Homodimer. Mg(2+) serves as cofactor.

The enzyme catalyses orotidine 5'-phosphate + diphosphate = orotate + 5-phospho-alpha-D-ribose 1-diphosphate. It functions in the pathway pyrimidine metabolism; UMP biosynthesis via de novo pathway; UMP from orotate: step 1/2. Its function is as follows. Catalyzes the transfer of a ribosyl phosphate group from 5-phosphoribose 1-diphosphate to orotate, leading to the formation of orotidine monophosphate (OMP). The chain is Orotate phosphoribosyltransferase from Sulfurovum sp. (strain NBC37-1).